We begin with the raw amino-acid sequence, 530 residues long: Autoinducer-2 kinase (530 aa).

The protein belongs to the FGGY kinase family.

It is found in the cytoplasm. It catalyses the reaction (S)-4,5-dihydroxypentane-2,3-dione + ATP = (2S)-2-hydroxy-3,4-dioxopentyl phosphate + ADP + H(+). In terms of biological role, catalyzes the phosphorylation of autoinducer-2 (AI-2) to phospho-AI-2, which subsequently inactivates the transcriptional regulator LsrR and leads to the transcription of the lsr operon. Phosphorylates the ring-open form of (S)-4,5-dihydroxypentane-2,3-dione (DPD), which is the precursor to all AI-2 signaling molecules, at the C5 position. This chain is Autoinducer-2 kinase, found in Photorhabdus laumondii subsp. laumondii (strain DSM 15139 / CIP 105565 / TT01) (Photorhabdus luminescens subsp. laumondii).